We begin with the raw amino-acid sequence, 688 residues long: DNA ligase (688 aa).

NAD(+) contacts are provided by residues 51-55 (DSEYD), 100-101 (SL), and Glu-129. Catalysis depends on Lys-131, which acts as the N6-AMP-lysine intermediate. NAD(+)-binding residues include Arg-152, Glu-189, Lys-308, and Lys-332. Cys-426, Cys-429, Cys-444, and Cys-450 together coordinate Zn(2+). One can recognise a BRCT domain in the interval 609–688 (ADEQPLKGQT…DELLALLANS (80 aa)).

It belongs to the NAD-dependent DNA ligase family. LigA subfamily. Requires Mg(2+) as cofactor. It depends on Mn(2+) as a cofactor.

It carries out the reaction NAD(+) + (deoxyribonucleotide)n-3'-hydroxyl + 5'-phospho-(deoxyribonucleotide)m = (deoxyribonucleotide)n+m + AMP + beta-nicotinamide D-nucleotide.. In terms of biological role, DNA ligase that catalyzes the formation of phosphodiester linkages between 5'-phosphoryl and 3'-hydroxyl groups in double-stranded DNA using NAD as a coenzyme and as the energy source for the reaction. It is essential for DNA replication and repair of damaged DNA. The sequence is that of DNA ligase from Shewanella sp. (strain MR-4).